Here is a 236-residue protein sequence, read N- to C-terminus: Diaminopimelate epimerase (236 aa).

Residues Asn8 and Asn55 each coordinate substrate. Cys64 acts as the Proton donor in catalysis. Residues 65–66, Asn159, and 176–177 contribute to the substrate site; these read GN and ER. Cys186 acts as the Proton acceptor in catalysis. 187–188 contacts substrate; that stretch reads GT.

This sequence belongs to the diaminopimelate epimerase family. As to quaternary structure, probably forms homotrimers.

The protein localises to the cytoplasm. It carries out the reaction (2S,6S)-2,6-diaminopimelate = meso-2,6-diaminopimelate. Its pathway is amino-acid biosynthesis; L-lysine biosynthesis via DAP pathway; DL-2,6-diaminopimelate from LL-2,6-diaminopimelate: step 1/1. In terms of biological role, catalyzes the stereoinversion of LL-2,6-diaminopimelate (L,L-DAP) to meso-diaminopimelate (meso-DAP), a precursor of L-lysine and an essential component of the bacterial peptidoglycan. Also catalyzes the racemization of certain amino acids, including Lys, with low efficiency. The protein is Diaminopimelate epimerase of Thermotoga maritima (strain ATCC 43589 / DSM 3109 / JCM 10099 / NBRC 100826 / MSB8).